The primary structure comprises 1377 residues: Neogenin (1377 aa).

Residues 1–2 (AA) form the signal peptide. The Extracellular portion of the chain corresponds to 3-1074 (AKNGSPPQSA…PTSPLDSNML (1072 aa)). Ig-like C2-type domains are found at residues 21–114 (PLYF…RTAK), 121–206 (PRFT…EAEL), 198–305 (PKFS…AELT), and 310–395 (PEFL…AQLI). An N-linked (GlcNAc...) asparagine glycan is attached at N42. 3 disulfides stabilise this stretch: C43/C98, C142/C190, and C239/C289. N179 carries an N-linked (GlcNAc...) asparagine glycan. N295 is a glycosylation site (N-linked (GlcNAc...) asparagine). A disulfide bridge connects residues C331 and C379. Fibronectin type-III domains lie at 410–504 (APRD…TQPE), 510–600 (PAPN…TLSD), 605–700 (APQN…TFES), 710–800 (VPSS…RPHT), 825–924 (PPVG…LVPT), and 926–1023 (PPKD…TPKA). N439 and N458 each carry an N-linked (GlcNAc...) asparagine glycan. N-linked (GlcNAc...) asparagine glycans are attached at residues N608 and N684. A glycan (N-linked (GlcNAc...) asparagine) is linked at N878. The tract at residues 1010–1066 (GPMSEAVQFRTPKADSSDKMPNDQALGSAGKGGRLPDLGSDYKPPMSGSNSPHGSPT) is disordered. Positions 1021–1030 (PKADSSDKMP) are enriched in basic and acidic residues. Residues 1056–1066 (SGSNSPHGSPT) are compositionally biased toward polar residues. Residues 1075–1095 (LVIIVSIGVITIVVVVIIAVF) form a helical membrane-spanning segment. Topologically, residues 1096–1377 (CTRRTTSHQK…MKDLNAITTA (282 aa)) are cytoplasmic. The tract at residues 1143–1281 (PIDKSPDPNP…SHPLKSFAVP (139 aa)) is disordered. Phosphoserine is present on residues S1147 and S1163. Composition is skewed to polar residues over residues 1160-1176 (PRNSQDITPVDNSMDSN), 1213-1238 (QPPQQSVRNTPSTDTMPASSSQTCCT), and 1246-1265 (ATSSSYLASSQEEDSGQSLP). At T1167 the chain carries Phosphothreonine. The residue at position 1317 (S1317) is a Phosphoserine. T1320 carries the post-translational modification Phosphothreonine. Residues S1348, S1350, and S1351 each carry the phosphoserine modification.

Belongs to the immunoglobulin superfamily. DCC family. Interacts with MYO10. Interacts with RGMA and RGMB. Interacts with BMP2, BMP4, BMP6, and BMP7.

It is found in the cell membrane. Its function is as follows. Multi-functional cell surface receptor regulating cell adhesion in many diverse developmental processes, including neural tube and mammary gland formation, myogenesis and angiogenesis. Receptor for members of the BMP, netrin, and repulsive guidance molecule (RGM) families. Netrin-Neogenin interactions result in a chemoattractive axon guidance response and cell-cell adhesion, the interaction between NEO1/Neogenin and RGMa and RGMb induces a chemorepulsive response. In Rattus norvegicus (Rat), this protein is Neogenin (Neo1).